Consider the following 84-residue polypeptide: MGITKSLMIFFHIVLLAVSLSNNIILTSGAETTKFSYDHCFHLCVEGEYGSRECFVDCTQKGFWHGVCANKTTAKDPIHCCCYN.

A signal peptide spans 1-29 (MGITKSLMIFFHIVLLAVSLSNNIILTSG). 4 cysteine pairs are disulfide-bonded: Cys-40–Cys-82, Cys-44–Cys-68, Cys-54–Cys-80, and Cys-58–Cys-81.

It belongs to the DEFL family.

Its subcellular location is the secreted. The protein is Defensin-like protein 49 of Arabidopsis thaliana (Mouse-ear cress).